Here is a 244-residue protein sequence, read N- to C-terminus: 1-(5-phosphoribosyl)-5-[(5-phosphoribosylamino)methylideneamino] imidazole-4-carboxamide isomerase (244 aa).

Aspartate 10 acts as the Proton acceptor in catalysis. The Proton donor role is filled by aspartate 132.

It belongs to the HisA/HisF family.

It localises to the cytoplasm. It carries out the reaction 1-(5-phospho-beta-D-ribosyl)-5-[(5-phospho-beta-D-ribosylamino)methylideneamino]imidazole-4-carboxamide = 5-[(5-phospho-1-deoxy-D-ribulos-1-ylimino)methylamino]-1-(5-phospho-beta-D-ribosyl)imidazole-4-carboxamide. It participates in amino-acid biosynthesis; L-histidine biosynthesis; L-histidine from 5-phospho-alpha-D-ribose 1-diphosphate: step 4/9. This is 1-(5-phosphoribosyl)-5-[(5-phosphoribosylamino)methylideneamino] imidazole-4-carboxamide isomerase from Xanthomonas campestris pv. campestris (strain 8004).